A 374-amino-acid chain; its full sequence is uncharacterized protein (374 aa).

The protein belongs to the mimivirus L41 family.

This is an uncharacterized protein from Acanthamoeba polyphaga (Amoeba).